The chain runs to 319 residues: MNATTSAAAYGPLAGADLEAELAQARVTDDAVRDAAIVDRDGGASVVPLARRRPGSPAPGDAVTLSGVSKRFGTRTVLDNVELGIARGSFVAIVGRSGCGKSTLLRLVAGLETPSSGALATRGEGGGTLDTRIMYQDARLLPWKTVLQNVMLGLGRGARDRARAVLDEVGLLERANDWPAQLSGGQRQRVALARALVHRPQLLLLDEPLGALDALTRIEMHALIERLWREHRFTALLVTHDVQEAVALGDRILLIEQGRVALDQQVPLDRPRARASAAFAALEDRVLQRVLAGGPGGADQEAAREVDHVRPVGQIRWAV.

One can recognise an ABC transporter domain in the interval 63–282; sequence VTLSGVSKRF…ARASAAFAAL (220 aa). 95–102 contacts ATP; it reads GRSGCGKS.

It belongs to the ABC transporter superfamily. Aliphatic sulfonates importer (TC 3.A.1.17.2) family. In terms of assembly, the complex is composed of two ATP-binding proteins (SsuB), two transmembrane proteins (SsuC) and a solute-binding protein (SsuA).

It localises to the cell inner membrane. It catalyses the reaction ATP + H2O + aliphatic sulfonate-[sulfonate-binding protein]Side 1 = ADP + phosphate + aliphatic sulfonateSide 2 + [sulfonate-binding protein]Side 1.. Part of the ABC transporter complex SsuABC involved in aliphatic sulfonates import. Responsible for energy coupling to the transport system. This is Aliphatic sulfonates import ATP-binding protein SsuB from Burkholderia ambifaria (strain ATCC BAA-244 / DSM 16087 / CCUG 44356 / LMG 19182 / AMMD) (Burkholderia cepacia (strain AMMD)).